The chain runs to 444 residues: Xylose isomerase (444 aa).

Active-site residues include H101 and D104. Mg(2+) is bound by residues E232, E268, H271, D296, D307, D309, and D339.

Belongs to the xylose isomerase family. In terms of assembly, homotetramer. Mg(2+) serves as cofactor.

The protein resides in the cytoplasm. The catalysed reaction is alpha-D-xylose = alpha-D-xylulofuranose. In Thermotoga maritima (strain ATCC 43589 / DSM 3109 / JCM 10099 / NBRC 100826 / MSB8), this protein is Xylose isomerase.